A 182-amino-acid polypeptide reads, in one-letter code: ATP synthase subunit delta (182 aa).

The protein belongs to the ATPase delta chain family. In terms of assembly, F-type ATPases have 2 components, F(1) - the catalytic core - and F(0) - the membrane proton channel. F(1) has five subunits: alpha(3), beta(3), gamma(1), delta(1), epsilon(1). CF(0) has four main subunits: a(1), b(1), b'(1) and c(10-14). The alpha and beta chains form an alternating ring which encloses part of the gamma chain. F(1) is attached to F(0) by a central stalk formed by the gamma and epsilon chains, while a peripheral stalk is formed by the delta, b and b' chains.

The protein resides in the cellular thylakoid membrane. Its function is as follows. F(1)F(0) ATP synthase produces ATP from ADP in the presence of a proton or sodium gradient. F-type ATPases consist of two structural domains, F(1) containing the extramembraneous catalytic core and F(0) containing the membrane proton channel, linked together by a central stalk and a peripheral stalk. During catalysis, ATP synthesis in the catalytic domain of F(1) is coupled via a rotary mechanism of the central stalk subunits to proton translocation. This protein is part of the stalk that links CF(0) to CF(1). It either transmits conformational changes from CF(0) to CF(1) or is implicated in proton conduction. The chain is ATP synthase subunit delta from Prochlorococcus marinus (strain NATL2A).